A 335-amino-acid chain; its full sequence is tRNA-dihydrouridine(20/20a) synthase (335 aa).

Residues 19-21 and glutamine 72 contribute to the FMN site; that span reads PMM. Cysteine 102 acts as the Proton donor in catalysis. Residues lysine 141, histidine 173, 213-215, and 235-236 contribute to the FMN site; these read NGG and GR.

The protein belongs to the Dus family. DusA subfamily. The cofactor is FMN.

The enzyme catalyses 5,6-dihydrouridine(20) in tRNA + NADP(+) = uridine(20) in tRNA + NADPH + H(+). It catalyses the reaction 5,6-dihydrouridine(20) in tRNA + NAD(+) = uridine(20) in tRNA + NADH + H(+). It carries out the reaction 5,6-dihydrouridine(20a) in tRNA + NADP(+) = uridine(20a) in tRNA + NADPH + H(+). The catalysed reaction is 5,6-dihydrouridine(20a) in tRNA + NAD(+) = uridine(20a) in tRNA + NADH + H(+). Catalyzes the synthesis of 5,6-dihydrouridine (D), a modified base found in the D-loop of most tRNAs, via the reduction of the C5-C6 double bond in target uridines. Specifically modifies U20 and U20a in tRNAs. The polypeptide is tRNA-dihydrouridine(20/20a) synthase (Xanthomonas campestris pv. campestris (strain ATCC 33913 / DSM 3586 / NCPPB 528 / LMG 568 / P 25)).